Here is a 247-residue protein sequence, read N- to C-terminus: Probable chemoreceptor glutamine deamidase CheD (247 aa).

The segment at Lys204 to Ala247 is disordered. Low complexity predominate over residues Gly227–Ala239.

Belongs to the CheD family.

The enzyme catalyses L-glutaminyl-[protein] + H2O = L-glutamyl-[protein] + NH4(+). Probably deamidates glutamine residues to glutamate on methyl-accepting chemotaxis receptors (MCPs), playing an important role in chemotaxis. The sequence is that of Probable chemoreceptor glutamine deamidase CheD from Burkholderia orbicola (strain AU 1054).